The sequence spans 181 residues: Acireductone dioxygenase (181 aa).

His-97, His-99, Glu-103, and His-141 together coordinate Fe(2+). Residues His-97, His-99, Glu-103, and His-141 each coordinate Ni(2+).

It belongs to the acireductone dioxygenase (ARD) family. As to quaternary structure, monomer. The cofactor is Fe(2+). Requires Ni(2+) as cofactor.

The catalysed reaction is 1,2-dihydroxy-5-(methylsulfanyl)pent-1-en-3-one + O2 = 3-(methylsulfanyl)propanoate + CO + formate + 2 H(+). It catalyses the reaction 1,2-dihydroxy-5-(methylsulfanyl)pent-1-en-3-one + O2 = 4-methylsulfanyl-2-oxobutanoate + formate + 2 H(+). It functions in the pathway amino-acid biosynthesis; L-methionine biosynthesis via salvage pathway; L-methionine from S-methyl-5-thio-alpha-D-ribose 1-phosphate: step 5/6. In terms of biological role, catalyzes 2 different reactions between oxygen and the acireductone 1,2-dihydroxy-3-keto-5-methylthiopentene (DHK-MTPene) depending upon the metal bound in the active site. Fe-containing acireductone dioxygenase (Fe-ARD) produces formate and 2-keto-4-methylthiobutyrate (KMTB), the alpha-ketoacid precursor of methionine in the methionine recycle pathway. Ni-containing acireductone dioxygenase (Ni-ARD) produces methylthiopropionate, carbon monoxide and formate, and does not lie on the methionine recycle pathway. The sequence is that of Acireductone dioxygenase from Stutzerimonas stutzeri (strain A1501) (Pseudomonas stutzeri).